The primary structure comprises 72 residues: UPF0270 protein YheU (72 aa).

It belongs to the UPF0270 family.

The sequence is that of UPF0270 protein YheU from Shigella flexneri serotype 5b (strain 8401).